We begin with the raw amino-acid sequence, 634 residues long: TATA box-binding protein-associated factor RNA polymerase I subunit B (634 aa).

The segment at 19-51 adopts an RRN7-type zinc-finger fold; that stretch reads LVCEYCGHGSEYAEDDADNGFFTCRQCSAIHTS. The Zn(2+) site is built by cysteine 21, cysteine 24, cysteine 42, and cysteine 45. The tract at residues 51–80 is B-reader; it reads STQNTATNPFDFPMTPAHLSAHRRPTQPTP. Positions 56–117 are disordered; sequence ATNPFDFPMT…EPRDFATGAN (62 aa). The segment covering 77–87 has biased composition (pro residues); the sequence is QPTPTPKPFPA. Residues 81–83 are B-linker; that stretch reads TPK. Residues 84–281 form an N-terminal cyclin fold region; sequence PFPAPRGAAT…DKLLGSSLND (198 aa). Over residues 88–98 the composition is skewed to low complexity; the sequence is PRGAATGAAAP. A C-terminal cyclin fold region spans residues 282–284; that stretch reads CPL.

The protein belongs to the RRN7/TAF1B family.

It is found in the nucleus. Its subcellular location is the nucleolus. Functionally, component of RNA polymerase I core factor complex that acts as a GTF2B/TFIIB-like factor and plays a key role in multiple steps during transcription initiation such as pre-initiation complex (PIC) assembly and postpolymerase recruitment events in polymerase I (Pol I) transcription. Binds rDNA promoters and plays a role in Pol I recruitment. This is TATA box-binding protein-associated factor RNA polymerase I subunit B from Oryza sativa subsp. indica (Rice).